Consider the following 196-residue polypeptide: Ribosome maturation factor RimP (196 aa).

A disordered region spans residues 164–196; it reads LAPQKPNKPGPKKPGHEKKKPSNESAAGKPRAE. Residues 173–182 show a composition bias toward basic residues; that stretch reads GPKKPGHEKK.

The protein belongs to the RimP family.

The protein localises to the cytoplasm. In terms of biological role, required for maturation of 30S ribosomal subunits. The sequence is that of Ribosome maturation factor RimP from Xanthomonas euvesicatoria pv. vesicatoria (strain 85-10) (Xanthomonas campestris pv. vesicatoria).